The primary structure comprises 267 residues: Phosphonates import ATP-binding protein PhnC 1 (267 aa).

One can recognise an ABC transporter domain in the interval 3–247; that stretch reads LSLDGVDLVH…ALDALYANEQ (245 aa). 36–43 lines the ATP pocket; sequence GPSGAGKT.

Belongs to the ABC transporter superfamily. Phosphonates importer (TC 3.A.1.9.1) family. The complex is composed of two ATP-binding proteins (PhnC), two transmembrane proteins (PhnE) and a solute-binding protein (PhnD).

It is found in the cell inner membrane. The catalysed reaction is phosphonate(out) + ATP + H2O = phosphonate(in) + ADP + phosphate + H(+). Part of the ABC transporter complex PhnCDE involved in phosphonates import. Responsible for energy coupling to the transport system. This is Phosphonates import ATP-binding protein PhnC 1 from Pseudomonas aeruginosa (strain ATCC 15692 / DSM 22644 / CIP 104116 / JCM 14847 / LMG 12228 / 1C / PRS 101 / PAO1).